The primary structure comprises 201 residues: Recombination protein RecR (201 aa).

The segment at Cys60 to Cys75 adopts a C4-type zinc-finger fold. The Toprim domain occupies Arg83–Pro178.

It belongs to the RecR family.

May play a role in DNA repair. It seems to be involved in an RecBC-independent recombinational process of DNA repair. It may act with RecF and RecO. This is Recombination protein RecR from Xanthobacter autotrophicus (strain ATCC BAA-1158 / Py2).